Reading from the N-terminus, the 203-residue chain is Imidazole glycerol phosphate synthase subunit HisH 1 (203 aa).

One can recognise a Glutamine amidotransferase type-1 domain in the interval 1-203; it reads MIAIIDYNAG…KMIENFVELI (203 aa). Residue Cys-82 is the Nucleophile of the active site. Catalysis depends on residues His-184 and Glu-186.

Heterodimer of HisH and HisF.

The protein resides in the cytoplasm. It catalyses the reaction 5-[(5-phospho-1-deoxy-D-ribulos-1-ylimino)methylamino]-1-(5-phospho-beta-D-ribosyl)imidazole-4-carboxamide + L-glutamine = D-erythro-1-(imidazol-4-yl)glycerol 3-phosphate + 5-amino-1-(5-phospho-beta-D-ribosyl)imidazole-4-carboxamide + L-glutamate + H(+). It carries out the reaction L-glutamine + H2O = L-glutamate + NH4(+). It participates in amino-acid biosynthesis; L-histidine biosynthesis; L-histidine from 5-phospho-alpha-D-ribose 1-diphosphate: step 5/9. In terms of biological role, IGPS catalyzes the conversion of PRFAR and glutamine to IGP, AICAR and glutamate. The HisH subunit provides the glutamine amidotransferase activity that produces the ammonia necessary to HisF for the synthesis of IGP and AICAR. This chain is Imidazole glycerol phosphate synthase subunit HisH 1 (hisH1), found in Methanococcus maripaludis (strain DSM 14266 / JCM 13030 / NBRC 101832 / S2 / LL).